The chain runs to 279 residues: uncharacterized protein (279 aa).

An N-terminal signal peptide occupies residues 1 to 21 (MKIIRTLFLLLIAVYGSSVVA).

To E.coli YfcO.

This is an uncharacterized protein from Salmonella typhimurium (strain LT2 / SGSC1412 / ATCC 700720).